The sequence spans 216 residues: MKIIEFRKKIPYLRYLEMQEKLRKFRKECILFLEHAPTITGGINYNPENLLVKPEFLESMGIQIHWTQRGGDFTAHEPGQLVLYSHVDLKKRNLSIRFYLENLLRSVIDSVRSTWDLQLISDSDSPGLYLESNPSQKICSIGVNFKSFFTSHGIAFNLSNDLKTFRCINPCGRNWTNMTSVKDLGFDFGLHKRDELISCLKKNLCSFLEPINVSSS.

One can recognise a BPL/LPL catalytic domain in the interval 24-212 (KFRKECILFL…NLCSFLEPIN (189 aa)). Substrate is bound by residues 69-76 (RGGDFTAH), 140-142 (SIG), and 153-155 (GIA). Cys171 serves as the catalytic Acyl-thioester intermediate.

It belongs to the LipB family.

The protein localises to the cytoplasm. It carries out the reaction octanoyl-[ACP] + L-lysyl-[protein] = N(6)-octanoyl-L-lysyl-[protein] + holo-[ACP] + H(+). The protein operates within protein modification; protein lipoylation via endogenous pathway; protein N(6)-(lipoyl)lysine from octanoyl-[acyl-carrier-protein]: step 1/2. In terms of biological role, catalyzes the transfer of endogenously produced octanoic acid from octanoyl-acyl-carrier-protein onto the lipoyl domains of lipoate-dependent enzymes. Lipoyl-ACP can also act as a substrate although octanoyl-ACP is likely to be the physiological substrate. The chain is Octanoyltransferase from Leptospira interrogans serogroup Icterohaemorrhagiae serovar Lai (strain 56601).